Consider the following 299-residue polypeptide: MGAQLRVYTQKIKSAQTTKKITRAMELISASRIQKAQQRMAASAPYSRAVTRAVSAVATFSNVDHILTTEPEKVERAAIVIFASDRGLAGAFSSSVLKESEQLAELLRSQGKDIVYYLVGRKAVGYFKFRKRSSERIWTGSTEKPEFETAKSIGDALVEKFVTPASEGGVDEIHIVFNRFVSIATQKPEVVRLLPLEVVEGVEAPGEGAVLPLYEFEPEVGDVLDALLPVYIESRIFNAMLQSAASEHAARQKAMKSASDNADKLVTTYTRLRNNARQTEITQQISEIVGGADALASSK.

It belongs to the ATPase gamma chain family. As to quaternary structure, F-type ATPases have 2 components, CF(1) - the catalytic core - and CF(0) - the membrane proton channel. CF(1) has five subunits: alpha(3), beta(3), gamma(1), delta(1), epsilon(1). CF(0) has three main subunits: a, b and c.

It localises to the cell membrane. Its function is as follows. Produces ATP from ADP in the presence of a proton gradient across the membrane. The gamma chain is believed to be important in regulating ATPase activity and the flow of protons through the CF(0) complex. The chain is ATP synthase gamma chain from Clavibacter michiganensis subsp. michiganensis (strain NCPPB 382).